Here is a 327-residue protein sequence, read N- to C-terminus: Annexin A8 (327 aa).

Annexin repeat units lie at residues 21–92 (FNPD…ALMY), 93–164 (PPYR…CLLQ), 177–249 (GLAL…TVVK), and 253–324 (NLHS…SLVG). Ca(2+)-binding residues include Met266, Gly268, Gly270, and Asp310.

Belongs to the annexin family.

Its function is as follows. This protein is an anticoagulant protein that acts as an indirect inhibitor of the thromboplastin-specific complex, which is involved in the blood coagulation cascade. The polypeptide is Annexin A8 (ANXA8) (Pan troglodytes (Chimpanzee)).